Consider the following 279-residue polypeptide: Lactose operon transcription activator (279 aa).

In terms of domain architecture, HTH araC/xylS-type spans 174-272 (QHAVDFINTN…EISASEYRHH (99 aa)). 2 DNA-binding regions (H-T-H motif) span residues 191–212 (EDVA…KKNL) and 239–262 (ISDI…TKHF).

Functionally, transcriptional regulator of the lacPH genes for lactose utilization. This chain is Lactose operon transcription activator (lacR), found in Staphylococcus xylosus.